The chain runs to 571 residues: Streptolysin O (571 aa).

The signal sequence occupies residues 1–33 (MSNKKTFKKYSRVAGLLTAALIIGNLVTANAES). The disordered stretch occupies residues 30 to 108 (NAESNKQNTA…KKSEEDHTEE (79 aa)). Residues 37-48 (NTASTETTTTNE) are compositionally biased toward low complexity. Basic and acidic residues-rich tracts occupy residues 50–68 (PKPESSELTTEKAGQKTDD) and 79–108 (APKEMPLESAEKEEKKSEDKKKSEEDHTEE). The next 4 beta stranded transmembrane spans lie at 260–273 (KSQIEAALNVNSKI), 280–289 (IDFKSISKGE), 358–367 (SNDVEAAFSA), and 375–387 (KTNGKYSDILENS). A Conserved undecapeptide motif is present at residues 529–539 (ECTGLAWEWWR). The short motif at 561–562 (TL) is the Cholesterol binding element.

The protein belongs to the cholesterol-dependent cytolysin family. In terms of assembly, homooligomeric pore complex of 35 to 50 subunits; when inserted in the host membrane.

The protein localises to the secreted. It is found in the host cell membrane. In terms of biological role, a cholesterol-dependent toxin that causes cytolysis by forming pores in cholesterol containing host membranes. After binding to target membranes, the protein undergoes a major conformation change, leading to its insertion in the host membrane and formation of an oligomeric pore complex. Cholesterol is required for binding to host membranes, membrane insertion and pore formation; cholesterol binding is mediated by a Thr-Leu pair in the C-terminus. Can be reversibly inactivated by oxidation. The protein is Streptolysin O (slo) of Streptococcus pyogenes serotype M18 (strain MGAS8232).